The chain runs to 307 residues: Ribosomal protein L11 methyltransferase (307 aa).

S-adenosyl-L-methionine contacts are provided by T144, G165, D187, and N235.

Belongs to the methyltransferase superfamily. PrmA family.

It is found in the cytoplasm. The catalysed reaction is L-lysyl-[protein] + 3 S-adenosyl-L-methionine = N(6),N(6),N(6)-trimethyl-L-lysyl-[protein] + 3 S-adenosyl-L-homocysteine + 3 H(+). Methylates ribosomal protein L11. This chain is Ribosomal protein L11 methyltransferase, found in Psychrobacter sp. (strain PRwf-1).